A 69-amino-acid chain; its full sequence is MKTQFAILMITVVLMQMLVQTEGGILGKLWEGVKSIFGKRGLKNLDQLDDSFDSDLSDADVKLLREMFK.

Residues 1–23 (MKTQFAILMITVVLMQMLVQTEG) form the signal peptide. F37 is subject to Phenylalanine amide. Residues 41-69 (GLKNLDQLDDSFDSDLSDADVKLLREMFK) constitute a propeptide that is removed on maturation.

Belongs to the non-disulfide-bridged peptide (NDBP) superfamily. Short antimicrobial peptide (group 4) family. In terms of tissue distribution, expressed by the venom gland.

It is found in the secreted. The protein localises to the target cell membrane. Its activity is regulated as follows. Antibacterial activity is decreased by serum. Functionally, antimicrobial peptide that acts by inducing concentration-dependent membrane disruption, implying a membrane-lytic mode of action. Acts with potent activity against Gram-positive bacteria (MIC=4.04-16.16 uM) including methicillin-resistant S.aureus (MRSA). Its activity on Gram-negative bacteria is controversial. Li and colleagues (2014) describe no activity towards E.coli and P.aeruginosa, while Kim and colleagues (2018) describe a potent activity towards P.aeruginosa (MIC=3.13-12.5 uM), and Luo and colleagues (2021) describe a potent activity against antibiotic-sensitive and -resistant Acinetobacter baumannii strains (MIC=3.2-10 uM). On S.aureus, possibly acts by impairing an unknown intracellular target and/or by interacting with the membrane, leading to the lateral expansion of the membrane area at high MIC concentrations, resulting in the formation of mesosome-like structures that leads to cell lysis. Shows moderate inhibition of P.aeruginosa biofilm formation. Administration of this peptide at sub-MIC concentrations in multiple treatments does not lead to resistance in S.aureus. Exhibits low toxicity and hemolytic activity against mammalian cell lines and BALB/c mice. In vivo, improves the survival rate of the MRSA infected BALB/c mice in the peritonitis model. The chain is Amphipathic peptide Hp1404 from Heterometrus petersii (Asian forest scorpion).